Consider the following 576-residue polypeptide: Type II restriction enzyme BsuRI (576 aa).

As to quaternary structure, monomer. It depends on Mg(2+) as a cofactor.

It carries out the reaction Endonucleolytic cleavage of DNA to give specific double-stranded fragments with terminal 5'-phosphates.. Its function is as follows. A P subtype restriction enzyme that recognizes the double-stranded sequence 5'-GGCC-3' and cleaves after G-2. The protein is Type II restriction enzyme BsuRI (hsdRR) of Bacillus subtilis.